The following is a 242-amino-acid chain: Putative prolyl 4-hydroxylase (242 aa).

Residues 128–238 form the Fe2OG dioxygenase domain; sequence NAEDLQVVRY…KWIANLWFRE (111 aa).

The protein belongs to the P4HA family. The cofactor is Fe cation. It depends on L-ascorbate as a cofactor.

It is found in the virion. The catalysed reaction is L-prolyl-[collagen] + 2-oxoglutarate + O2 = trans-4-hydroxy-L-prolyl-[collagen] + succinate + CO2. In terms of biological role, may catalyze the post-translational formation of 4-hydroxyproline in -Xaa-Pro-Gly- sequences in the 6 collagen-like proteins of Mimivirus. The protein is Putative prolyl 4-hydroxylase of Acanthamoeba polyphaga mimivirus (APMV).